The chain runs to 196 residues: Pyridoxal 5'-phosphate synthase subunit PdxT (196 aa).

An L-glutamine-binding site is contributed by 47 to 49; sequence GES. Catalysis depends on Cys-79, which acts as the Nucleophile. Residues Arg-106 and 134 to 135 each bind L-glutamine; that span reads IR. Active-site charge relay system residues include His-170 and Glu-172.

The protein belongs to the glutaminase PdxT/SNO family. In terms of assembly, in the presence of PdxS, forms a dodecamer of heterodimers. Only shows activity in the heterodimer.

It carries out the reaction aldehydo-D-ribose 5-phosphate + D-glyceraldehyde 3-phosphate + L-glutamine = pyridoxal 5'-phosphate + L-glutamate + phosphate + 3 H2O + H(+). It catalyses the reaction L-glutamine + H2O = L-glutamate + NH4(+). Its pathway is cofactor biosynthesis; pyridoxal 5'-phosphate biosynthesis. In terms of biological role, catalyzes the hydrolysis of glutamine to glutamate and ammonia as part of the biosynthesis of pyridoxal 5'-phosphate. The resulting ammonia molecule is channeled to the active site of PdxS. This is Pyridoxal 5'-phosphate synthase subunit PdxT from Halalkalibacterium halodurans (strain ATCC BAA-125 / DSM 18197 / FERM 7344 / JCM 9153 / C-125) (Bacillus halodurans).